We begin with the raw amino-acid sequence, 246 residues long: Carboxylesterase (246 aa).

Residue S93 is the Nucleophile of the active site. Residues D192 and H222 each act as charge relay system in the active site.

It belongs to the lipase/esterase LIP3/BchO family. Homodimer.

It catalyses the reaction a carboxylic ester + H2O = an alcohol + a carboxylate + H(+). Functionally, involved in the detoxification of xenobiotics. Shows maximal activity with C6 substrates, with gradually decreasing activity from C8 to C12 substrates. No activity for higher chain length substrates acids rather than long-chain ones. The chain is Carboxylesterase (est) from Geobacillus stearothermophilus (Bacillus stearothermophilus).